The primary structure comprises 98 residues: Flagellar hook-basal body complex protein FliE (98 aa).

Residues 1–23 (MNNINDLRLNNNISNTNKSQNST) show a composition bias toward low complexity. Residues 1 to 24 (MNNINDLRLNNNISNTNKSQNSTG) are disordered.

This sequence belongs to the FliE family.

It localises to the bacterial flagellum basal body. The chain is Flagellar hook-basal body complex protein FliE from Campylobacter jejuni subsp. jejuni serotype O:2 (strain ATCC 700819 / NCTC 11168).